The chain runs to 320 residues: Malate dehydrogenase (320 aa).

NAD(+)-binding positions include 10–15 (GAGQIG) and D34. Positions 83 and 89 each coordinate substrate. NAD(+) is bound by residues N96 and 119 to 121 (ITN). The substrate site is built by N121 and R152. The active-site Proton acceptor is H176.

This sequence belongs to the LDH/MDH superfamily. MDH type 3 family.

The catalysed reaction is (S)-malate + NAD(+) = oxaloacetate + NADH + H(+). Its function is as follows. Catalyzes the reversible oxidation of malate to oxaloacetate. This Dinoroseobacter shibae (strain DSM 16493 / NCIMB 14021 / DFL 12) protein is Malate dehydrogenase.